Reading from the N-terminus, the 336-residue chain is 4-hydroxythreonine-4-phosphate dehydrogenase (336 aa).

Residues His135 and Thr136 each contribute to the substrate site. Positions 165, 210, and 265 each coordinate a divalent metal cation. Residues Lys273, Asn282, and Arg291 each coordinate substrate.

This sequence belongs to the PdxA family. In terms of assembly, homodimer. The cofactor is Zn(2+). Mg(2+) serves as cofactor. Requires Co(2+) as cofactor.

It is found in the cytoplasm. It catalyses the reaction 4-(phosphooxy)-L-threonine + NAD(+) = 3-amino-2-oxopropyl phosphate + CO2 + NADH. It participates in cofactor biosynthesis; pyridoxine 5'-phosphate biosynthesis; pyridoxine 5'-phosphate from D-erythrose 4-phosphate: step 4/5. Catalyzes the NAD(P)-dependent oxidation of 4-(phosphooxy)-L-threonine (HTP) into 2-amino-3-oxo-4-(phosphooxy)butyric acid which spontaneously decarboxylates to form 3-amino-2-oxopropyl phosphate (AHAP). The protein is 4-hydroxythreonine-4-phosphate dehydrogenase of Marinobacter nauticus (strain ATCC 700491 / DSM 11845 / VT8) (Marinobacter aquaeolei).